Reading from the N-terminus, the 413-residue chain is MQKRVVILLLDSFGIGASEDARDFGDLGANTLGNIAKACFNNLADSNDRNGALKLPYLESLGLGLSALKATNELPLGFESKPNLIGAYAYAQELSSAKDTISGHWEMMGAPVLFEWGYFKDKNNSFPKEILDEIMRKTKIKGYLGNCHASGTEIIKDLGEKHLETLYPIFYTSADSVFQIVAHEEKFGLDNLYALCEEAFQILEPLKIARVIARPFIGANREDFKRTAHRKDYAIKPHKKLLFEKFIEEKQGEVISIGKIADIYAHVGITQKFKAGSLMELCDVTLEQIKNAKNNSLIFTNFVHFDSDYGHRRDISGYANALEYFDARLKEVLENLRENDLLILCADHGCDPSFKGTDHTREYIPVLFYHKDLQPAFLGKSESFADIGQSIAYFLGLSPLDYGKNLLNFKGQS.

Mn(2+) is bound by residues Asp-11, Asp-306, His-311, Asp-347, His-348, and His-359.

This sequence belongs to the phosphopentomutase family. Requires Mn(2+) as cofactor.

Its subcellular location is the cytoplasm. The catalysed reaction is 2-deoxy-alpha-D-ribose 1-phosphate = 2-deoxy-D-ribose 5-phosphate. It catalyses the reaction alpha-D-ribose 1-phosphate = D-ribose 5-phosphate. The protein operates within carbohydrate degradation; 2-deoxy-D-ribose 1-phosphate degradation; D-glyceraldehyde 3-phosphate and acetaldehyde from 2-deoxy-alpha-D-ribose 1-phosphate: step 1/2. In terms of biological role, isomerase that catalyzes the conversion of deoxy-ribose 1-phosphate (dRib-1-P) and ribose 1-phosphate (Rib-1-P) to deoxy-ribose 5-phosphate (dRib-5-P) and ribose 5-phosphate (Rib-5-P), respectively. The chain is Phosphopentomutase from Helicobacter pylori (strain Shi470).